Here is a 471-residue protein sequence, read N- to C-terminus: MIEIQFYNSLSGRKEKFSPSDPNRVTVYSCGPTVYNFAHIGNLRAFLFVDVLRRSLKLLGYGVDMTMNITDIDDKIIRDSIASKKSIIEFTAPWTKAFFEDLKTVSAEILEHYPKATDSIPEMVDIIQKLQKKGLVYEKDESLYFSIQKFQNYGKLSKIDTSGMKTGTRYDTDEYEKEDVRDFVLWKSPKLEGETSWYTLVGTGRPGWHLECSAMIRKVYGSGVDIHTGGVDLLFPHHENEIAQSEGAFPEESFVKTWLHSEHLLVDGQKMSKSKGNFYTLRDLIQQGLDPKAIRFLLISTHYRSKLNFSTDRIAEASANIRKIQNCLDRILELEPDIKADFYFLFSIPFVQTWKKEFEESLADDLNISKALAVVFESVKQINSLLDTNQSDSKQRIEYIQILAYFDRILGVLNFESKKDLLDSEIDSLIEERQIARKNKDFARSDAIRDQLLAQGILIEDTKEGIRWRKK.

Cysteine 30 provides a ligand contact to Zn(2+). The 'HIGH' region motif lies at 32–42 (PTVYNFAHIGN). The Zn(2+) site is built by cysteine 212, histidine 237, and glutamate 241. The 'KMSKS' region signature appears at 270 to 274 (KMSKS). An ATP-binding site is contributed by lysine 273.

It belongs to the class-I aminoacyl-tRNA synthetase family. Monomer. It depends on Zn(2+) as a cofactor.

Its subcellular location is the cytoplasm. It carries out the reaction tRNA(Cys) + L-cysteine + ATP = L-cysteinyl-tRNA(Cys) + AMP + diphosphate. The chain is Cysteine--tRNA ligase from Leptospira interrogans serogroup Icterohaemorrhagiae serovar copenhageni (strain Fiocruz L1-130).